Consider the following 572-residue polypeptide: Solute carrier family 22 member 16 (572 aa).

Residues 21–41 (IFLYFICAFQNISCGIHYLAS) traverse the membrane as a helical segment. The N-linked (GlcNAc...) asparagine glycan is linked to Asn57. 5 helical membrane-spanning segments follow: residues 156–176 (LIQPTFMFGVLLGAVIFGYLS), 183–203 (LVLWASSTGVFLFGIAAAFTF), 208–228 (FIVARFLLAISGSGYLVVVFV), 244–264 (IHLHSFFAFGTMVVALTGYFV), and 268–288 (WIYQIVLSSVTVPFVLCCWML). N-linked (GlcNAc...) asparagine glycosylation is present at Asn315. The next 6 membrane-spanning stretches (helical) occupy residues 359–379 (TLILWLIWFTGCLGFYTFSLN), 389–409 (LNLFLMGVVEIPAYVLVCLGM), 416–436 (NILIFSLLSSAVTSGVIMVIP), 441–461 (VWLVVASMAGKFFIGAAFGLI), 476–496 (LAVGSGSTVGRVGSIVAPLCI), and 503–523 (IFMPQLLVGTLALVSGVLTFL). N-linked (GlcNAc...) asparagine glycosylation is present at Asn559.

It belongs to the major facilitator (TC 2.A.1) superfamily. Organic cation transporter (TC 2.A.1.19) family.

It localises to the cell membrane. The catalysed reaction is (R)-carnitine(in) = (R)-carnitine(out). The enzyme catalyses spermidine(in) = spermidine(out). Functionally, facilitative organic cation transporter that mediates the transport of carnitine as well as the polyamine spermidine. Mediates the partially Na(+)-dependent bidirectional transport of carnitine. May mediate L-carnitine secretion from testis epididymal epithelium into the lumen which is involved in the maturation of spermatozoa. The polypeptide is Solute carrier family 22 member 16 (SLC22A16) (Bos taurus (Bovine)).